The chain runs to 260 residues: DNA repair protein RecO (260 aa).

It belongs to the RecO family.

Involved in DNA repair and RecF pathway recombination. This is DNA repair protein RecO from Levilactobacillus brevis (strain ATCC 367 / BCRC 12310 / CIP 105137 / JCM 1170 / LMG 11437 / NCIMB 947 / NCTC 947) (Lactobacillus brevis).